We begin with the raw amino-acid sequence, 954 residues long: Calsyntenin-1 (954 aa).

The first 25 residues, 1–25 (MRIRGVKPFASAVGLLLGLLYAVDA), serve as a signal peptide directing secretion. Topologically, residues 26-833 (AKVNKHKPWI…THQASVVPSA (808 aa)) are extracellular. Cadherin domains follow at residues 35 to 151 (IETT…SPVF) and 152 to 252 (KEKS…KPSW). 3 N-linked (GlcNAc...) asparagine glycosylation sites follow: Asn-333, Asn-353, and Asn-552. A helical transmembrane segment spans residues 834–854 (ATIVIVVCVSFLVFMIILGVF). Residues 855–954 (RIRAAHQRTM…LEWDDSTLTY (100 aa)) are Cytoplasmic-facing. The disordered stretch occupies residues 891–954 (TYEDQHSSEE…LEWDDSTLTY (64 aa)). A compositionally biased stretch (acidic residues) spans 900 to 935 (EEGDEEEEESEDGEEEDDITSAESDSSEDEAGEQED).

Belongs to the calsyntenin family. As to quaternary structure, homooligomer and heterooligomer; mediates both homophilic and heterophilc interactions with clstn2 and clstn3 paralogs via cadherin domains. As to expression, by 48 hours post-fertilization (hpf), widely expressed in the brain, with strong expression in the telencephalon and the midbrain.

The protein localises to the postsynaptic cell membrane. The protein resides in the endoplasmic reticulum membrane. It localises to the golgi apparatus membrane. Its subcellular location is the cell projection. It is found in the neuron projection. Postsynaptic adhesion molecule involved in vesicle trafficking; required for branching of peripheral but not central axons of sensory neurons. Promotes synapse development by acting as a cell adhesion molecule at the postsynaptic membrane, which associates with presynaptic neurexins. This is Calsyntenin-1 from Danio rerio (Zebrafish).